The primary structure comprises 327 residues: DNA-directed RNA polymerase subunit alpha (327 aa).

The segment at 1 to 242 is alpha N-terminal domain (alpha-NTD); that stretch reads MRKFLKYQLD…AHLEPIVNID (242 aa). An alpha C-terminal domain (alpha-CTD) region spans residues 259–327; sequence KRQNASISID…TERSLELKKD (69 aa).

The protein belongs to the RNA polymerase alpha chain family. Homodimer. The RNAP catalytic core consists of 2 alpha, 1 beta, 1 beta' and 1 omega subunit. When a sigma factor is associated with the core the holoenzyme is formed, which can initiate transcription.

The catalysed reaction is RNA(n) + a ribonucleoside 5'-triphosphate = RNA(n+1) + diphosphate. Its function is as follows. DNA-dependent RNA polymerase catalyzes the transcription of DNA into RNA using the four ribonucleoside triphosphates as substrates. In Ureaplasma parvum serovar 3 (strain ATCC 700970), this protein is DNA-directed RNA polymerase subunit alpha.